A 177-amino-acid chain; its full sequence is Translation initiation factor IF-3 (177 aa).

The protein belongs to the IF-3 family. In terms of assembly, monomer.

It localises to the cytoplasm. IF-3 binds to the 30S ribosomal subunit and shifts the equilibrium between 70S ribosomes and their 50S and 30S subunits in favor of the free subunits, thus enhancing the availability of 30S subunits on which protein synthesis initiation begins. The chain is Translation initiation factor IF-3 from Nostoc sp. (strain PCC 7120 / SAG 25.82 / UTEX 2576).